The following is a 258-amino-acid chain: Spindlin-3 (258 aa).

The tract at residues 1–23 (MKTPFGKAAAGQRSRTGAGHGSV) is disordered. Tudor-like domain stretches follow at residues 50–99 (VGCR…LELH), 129–178 (VGKA…YQLL), and 210–255 (VGKQ…YDLV). Histone H3K4me3 and H3R8me2a binding stretches follow at residues Glu138 and 246-248 (DFH).

This sequence belongs to the SPIN/STSY family. As to quaternary structure, interacts with C11orf84/SPINDOC.

In terms of biological role, exhibits H3K4me3-binding activity. The polypeptide is Spindlin-3 (SPIN3) (Homo sapiens (Human)).